The sequence spans 245 residues: Protein-glutamine gamma-glutamyltransferase (245 aa).

Belongs to the bacillus TGase family.

The catalysed reaction is L-glutaminyl-[protein] + L-lysyl-[protein] = [protein]-L-lysyl-N(6)-5-L-glutamyl-[protein] + NH4(+). Probably plays a role in the assembly of the spore coat proteins by catalyzing epsilon-(gamma-glutamyl)lysine cross-links. The chain is Protein-glutamine gamma-glutamyltransferase from Bacillus licheniformis (strain ATCC 14580 / DSM 13 / JCM 2505 / CCUG 7422 / NBRC 12200 / NCIMB 9375 / NCTC 10341 / NRRL NRS-1264 / Gibson 46).